Reading from the N-terminus, the 120-residue chain is Large ribosomal subunit protein bL19 (120 aa).

Belongs to the bacterial ribosomal protein bL19 family.

This protein is located at the 30S-50S ribosomal subunit interface and may play a role in the structure and function of the aminoacyl-tRNA binding site. This is Large ribosomal subunit protein bL19 from Renibacterium salmoninarum (strain ATCC 33209 / DSM 20767 / JCM 11484 / NBRC 15589 / NCIMB 2235).